Reading from the N-terminus, the 193-residue chain is Deoxycytidylate deaminase (193 aa).

Residues 1-171 (MKASTVLQIA…DILRNAGIEV (171 aa)) enclose the CMP/dCMP-type deaminase domain. Positions 19, 49, 94, 102, and 104 each coordinate Zn(2+). The active-site Proton donor is Glu106. Residues Cys132 and Cys135 each coordinate Zn(2+). Residue Tyr153 coordinates substrate.

Belongs to the cytidine and deoxycytidylate deaminase family. As to quaternary structure, homohexamer. It depends on Zn(2+) as a cofactor.

The enzyme catalyses dCMP + H2O + H(+) = dUMP + NH4(+). Its activity is regulated as follows. Allosteric enzyme whose activity is greatly influenced by the end products of its metabolic pathway, dCTP and dTTP. Supplies the nucleotide substrate for thymidylate synthetase. The polypeptide is Deoxycytidylate deaminase (CD) (Escherichia coli (Bacteriophage T4)).